The chain runs to 527 residues: MASDFLPVRRALLSVSDKTGLIDLARALVARNVELLSTGGTAKAIRDAGLPVKDVAELTGFPEMMDGRVKTLHPLVHGGLLGRAGVDEAVMAEHGIAPIDLLVLNLYPFESVTAKADCTLADAVENIDIGGPAMLRSAAKNFARVAVATDPAQYADLLAELEANNGQLSAAQRFALSVAAFNRVAQYDAAISNYLSAVADSAESVPTRSPFPAQINSNFIKVMDLRYGENPHQSGAFYRDLYPVPGTLATFQQLQGKELSYNNLADADAAWECVRQFDAPACVIVKHANPCGVAVGVACGDAYELAYATDPTSAFGGILAFNRTLDAATAKAILDRQFVEVLIAPDYEPGALDYATKKANVRVLKIPHGAGLNNYDTKRIGSGLLMQSADNRGMSLGELSVVTKRAPSDAELADLLFAWRVAKYVKSNAIVYAKDSRTIGVGAGQMSRVVSAKIAALKAEEAKLTVAGSVMASDAFFPFRDGIDAAAAAGIQAVIQPGGSMRDGEVIAAADEHGLAMVFTGVRHFRH.

The MGS-like domain occupies 1–149 (MASDFLPVRR…KNFARVAVAT (149 aa)).

It belongs to the PurH family.

It carries out the reaction (6R)-10-formyltetrahydrofolate + 5-amino-1-(5-phospho-beta-D-ribosyl)imidazole-4-carboxamide = 5-formamido-1-(5-phospho-D-ribosyl)imidazole-4-carboxamide + (6S)-5,6,7,8-tetrahydrofolate. The catalysed reaction is IMP + H2O = 5-formamido-1-(5-phospho-D-ribosyl)imidazole-4-carboxamide. It participates in purine metabolism; IMP biosynthesis via de novo pathway; 5-formamido-1-(5-phospho-D-ribosyl)imidazole-4-carboxamide from 5-amino-1-(5-phospho-D-ribosyl)imidazole-4-carboxamide (10-formyl THF route): step 1/1. It functions in the pathway purine metabolism; IMP biosynthesis via de novo pathway; IMP from 5-formamido-1-(5-phospho-D-ribosyl)imidazole-4-carboxamide: step 1/1. This is Bifunctional purine biosynthesis protein PurH from Xanthomonas campestris pv. campestris (strain 8004).